The sequence spans 355 residues: Uroporphyrinogen decarboxylase (355 aa).

Residues 38–42 (RQAGR), Asp87, Tyr162, Ser217, and His331 contribute to the substrate site.

It belongs to the uroporphyrinogen decarboxylase family. In terms of assembly, homodimer.

It localises to the cytoplasm. The enzyme catalyses uroporphyrinogen III + 4 H(+) = coproporphyrinogen III + 4 CO2. The protein operates within porphyrin-containing compound metabolism; protoporphyrin-IX biosynthesis; coproporphyrinogen-III from 5-aminolevulinate: step 4/4. Its function is as follows. Catalyzes the decarboxylation of four acetate groups of uroporphyrinogen-III to yield coproporphyrinogen-III. This is Uroporphyrinogen decarboxylase from Streptomyces coelicolor (strain ATCC BAA-471 / A3(2) / M145).